The chain runs to 130 residues: Small ribosomal subunit protein uS8 (130 aa).

It belongs to the universal ribosomal protein uS8 family. As to quaternary structure, part of the 30S ribosomal subunit. Contacts proteins S5 and S12.

Its function is as follows. One of the primary rRNA binding proteins, it binds directly to 16S rRNA central domain where it helps coordinate assembly of the platform of the 30S subunit. The chain is Small ribosomal subunit protein uS8 from Haemophilus influenzae (strain 86-028NP).